The chain runs to 249 residues: 5'-nucleotidase SurE (249 aa).

Residues Asp-9, Asp-10, Ser-40, and Asn-92 each contribute to the a divalent metal cation site.

It belongs to the SurE nucleotidase family. A divalent metal cation is required as a cofactor.

The protein resides in the cytoplasm. It catalyses the reaction a ribonucleoside 5'-phosphate + H2O = a ribonucleoside + phosphate. Its function is as follows. Nucleotidase that shows phosphatase activity on nucleoside 5'-monophosphates. The polypeptide is 5'-nucleotidase SurE (Shewanella oneidensis (strain ATCC 700550 / JCM 31522 / CIP 106686 / LMG 19005 / NCIMB 14063 / MR-1)).